The sequence spans 1095 residues: Collagen, type I, alpha 1a (1095 aa).

Over residues 1–21 (SPAMPVPGPMGPMGPRGPPGS) the composition is skewed to pro residues. A disordered region spans residues 1-1011 (SPAMPVPGPM…QPQEKAPDPY (1011 aa)). Residues 22 to 49 (PGASGPQGFTGPPGEPGEAGSAGAMGPR) are compositionally biased toward low complexity. The segment covering 58–72 (NGEDGESGKPGRGGE) has biased composition (basic and acidic residues). Over residues 127 to 145 (TGAAGAAGARGNDGAAGAA) the composition is skewed to low complexity. Residues 147 to 160 (PPGPTGPAGPPGFP) show a composition bias toward pro residues. Positions 161-179 (GGPGAKGDAGAQGGRGPEG) are enriched in gly residues. 3 stretches are compositionally biased toward low complexity: residues 180-223 (PAGA…AGAP), 232-270 (SGPQGAAGAPGPKGNTGEVGAPGAKGEAGAKGEAGAPGV), and 288-297 (EPGAAGARGA). Residues 299 to 311 (GERGGPGGRGFPG) show a composition bias toward gly residues. Composition is skewed to low complexity over residues 385 to 400 (VGARGQPGVMGFPGPK), 477 to 489 (LPGEAGATGPAGA), 498 to 544 (ERGA…QGMP), and 577 to 592 (RGLTGPLGLPGPAGAT). The span at 602–611 (GPVGPGGARG) shows a compositional bias: gly residues. 2 stretches are compositionally biased toward low complexity: residues 625 to 661 (AGFAGPPGADGQPGAKGEAGDNGAKGDAGPPGAAGPT) and 675 to 697 (PKGARGAAGPPGATGFPGAAGRV). Pro residues predominate over residues 699 to 712 (PPGPSGNPGPPGPA). Residues 804-822 (PGLAGAPGEPGREGSPGNE) are compositionally biased toward low complexity. Positions 848 to 858 (APGPPGAPGPV) are enriched in pro residues. Positions 872–893 (PAGPAGSAGPAGPRGPAGALGL) are enriched in low complexity. Residues 894–908 (RGDKGESGEAGERGM) are compositionally biased toward basic and acidic residues. Residues 924–960 (AGSSGEQGPAGAAGPAGPRGPAGSAGSPGKDGMSGLP) show a composition bias toward low complexity. A compositionally biased stretch (pro residues) spans 976 to 988 (AGPPGPPGPPGAP). Residues 1062-1095 (TGTWGKLPLLDLAPMDVGAPDQEFGLEVGPVCFL) enclose the Fibrillar collagen NC1 domain.

Belongs to the fibrillar collagen family.

The protein resides in the secreted. It is found in the extracellular space. It localises to the extracellular matrix. This Epinephelus caninus (Dogtooth grouper) protein is Collagen, type I, alpha 1a.